A 1066-amino-acid chain; its full sequence is DNA-directed RNA polymerase subunit beta (1066 aa).

Belongs to the RNA polymerase beta chain family. As to quaternary structure, in plastids the minimal PEP RNA polymerase catalytic core is composed of four subunits: alpha, beta, beta', and beta''. When a (nuclear-encoded) sigma factor is associated with the core the holoenzyme is formed, which can initiate transcription.

The protein localises to the plastid. It is found in the chloroplast. It catalyses the reaction RNA(n) + a ribonucleoside 5'-triphosphate = RNA(n+1) + diphosphate. In terms of biological role, DNA-dependent RNA polymerase catalyzes the transcription of DNA into RNA using the four ribonucleoside triphosphates as substrates. In Psilotum nudum (Whisk fern), this protein is DNA-directed RNA polymerase subunit beta.